Here is a 314-residue protein sequence, read N- to C-terminus: Peroxidase 2 (314 aa).

Residues 1–23 form the signal peptide; the sequence is MASASSVSLMLLVAAAMASAASA. The residue at position 24 (Gln-24) is a Pyrrolidone carboxylic acid. Disulfide bonds link Cys-34–Cys-109, Cys-67–Cys-72, Cys-115–Cys-310, and Cys-194–Cys-219. His-65 functions as the Proton acceptor in the catalytic mechanism. 5 residues coordinate Ca(2+): Asp-66, Val-69, Gly-71, Asp-73, and Ser-75. Asn-148 carries N-linked (GlcNAc...) asparagine glycosylation. Pro-157 serves as a coordination point for substrate. Asn-169 carries N-linked (GlcNAc...) asparagine glycosylation. Position 187 (His-187) interacts with heme b. Ca(2+) is bound at residue Thr-188. N-linked (GlcNAc...) asparagine glycosylation is present at Asn-203. Ca(2+)-binding residues include Asp-234, Thr-237, and Asp-242. N-linked (GlcNAc...) asparagine glycans are attached at residues Asn-274 and Asn-309.

Belongs to the peroxidase family. Classical plant (class III) peroxidase subfamily. Ca(2+) serves as cofactor. The cofactor is heme b.

The protein resides in the secreted. The enzyme catalyses 2 a phenolic donor + H2O2 = 2 a phenolic radical donor + 2 H2O. Removal of H(2)O(2), oxidation of toxic reductants, biosynthesis and degradation of lignin, suberization, auxin catabolism, response to environmental stresses such as wounding, pathogen attack and oxidative stress. These functions might be dependent on each isozyme/isoform in each plant tissue. This is Peroxidase 2 (PRX112) from Oryza sativa subsp. japonica (Rice).